We begin with the raw amino-acid sequence, 331 residues long: Glutamyl-Q tRNA(Asp) synthetase (331 aa).

Over residues 1–30 (MVQQAVIQRSANQQLSNQRSANQRATNQPT) the composition is skewed to polar residues. Positions 1–36 (MVQQAVIQRSANQQLSNQRSANQRATNQPTEYVGRF) are disordered. L-glutamate contacts are provided by residues 35 to 39 (RFAPS) and glutamate 71. A 'HIGH' region motif is present at residues 38–48 (PSPSGDLHFGS). Positions 127, 129, 141, and 145 each coordinate Zn(2+). L-glutamate contacts are provided by tyrosine 198 and arginine 216. The short motif at 254–258 (KLSKQ) is the 'KMSKS' region element. Lysine 257 contributes to the ATP binding site.

This sequence belongs to the class-I aminoacyl-tRNA synthetase family. GluQ subfamily. Zn(2+) is required as a cofactor.

Catalyzes the tRNA-independent activation of glutamate in presence of ATP and the subsequent transfer of glutamate onto a tRNA(Asp). Glutamate is transferred on the 2-amino-5-(4,5-dihydroxy-2-cyclopenten-1-yl) moiety of the queuosine in the wobble position of the QUC anticodon. This is Glutamyl-Q tRNA(Asp) synthetase from Yersinia pseudotuberculosis serotype I (strain IP32953).